The sequence spans 172 residues: Biogenesis of lysosome-related organelles complex 1 subunit 6 (172 aa).

Residues 1-10 (MSVPEPPPPD) show a composition bias toward pro residues. Disordered stretches follow at residues 1 to 37 (MSVPEPPPPDGVLTGPSDSLEAGEPTPGLSDTSPDEG) and 141 to 172 (QKRQREELEREQQREKEFEREKQLTAKPAKRT). Residues 63–167 (DLQRSKRALQ…FEREKQLTAK (105 aa)) adopt a coiled-coil conformation. Positions 143-164 (RQREELEREQQREKEFEREKQL) are enriched in basic and acidic residues.

Belongs to the BLOC1S6 family. Octamer composed of one copy each BLOC1S1, BLOC1S2, BLOC1S3, BLOC1S4, BLOC1S5, BLOC1S6, DTNBP1/BLOC1S7 and SNAPIN/BLOC1S8. Interacts with SNAP47. Homodimer. Component of the biogenesis of lysosome-related organelles complex 1 (BLOC-1) composed of BLOC1S1, BLOC1S2, BLOC1S3, BLOC1S4, BLOC1S5, BLOC1S6, DTNBP1/BLOC1S7 and SNAPIN/BLOC1S8. Interacts with BLOC1S4, BLOC1S5, DTNBP1/BLOC1S7, F-actin, SNAP25 isoform 1 and STX12. In terms of processing, phosphorylated. In terms of tissue distribution, expressed in liver, kidney and spleen (at protein level). Ubiquitously expressed, with the highest expression levels observed in brain, heart, liver and kidney.

It is found in the cytoplasm. It localises to the membrane. Functionally, component of the BLOC-1 complex, a complex that is required for normal biogenesis of lysosome-related organelles (LRO), such as platelet dense granules and melanosomes. In concert with the AP-3 complex, the BLOC-1 complex is required to target membrane protein cargos into vesicles assembled at cell bodies for delivery into neurites and nerve terminals. The BLOC-1 complex, in association with SNARE proteins, is also proposed to be involved in neurite extension. May play a role in intracellular vesicle trafficking, particularly in the vesicle-docking and fusion process. The polypeptide is Biogenesis of lysosome-related organelles complex 1 subunit 6 (Bloc1s6) (Mus musculus (Mouse)).